A 930-amino-acid polypeptide reads, in one-letter code: Protocadherin gamma-B6 (930 aa).

The first 30 residues, 1-30, serve as a signal peptide directing secretion; it reads MGGSCAQRRRAGPRQVLFPLLLPFFYPTLC. Cadherin domains lie at 31 to 133, 134 to 242, 243 to 347, 348 to 452, 453 to 562, and 570 to 675; these read EPIR…APQF, DKKE…PPVF, SRDE…SPEI, IITS…APVF, DQTS…APRV, and DGSA…LPDL. The Extracellular portion of the chain corresponds to 31–691; that stretch reads EPIRYSIPEE…SDPQAELQFY (661 aa). 3 N-linked (GlcNAc...) asparagine glycosylation sites follow: asparagine 304, asparagine 419, and asparagine 545. A helical transmembrane segment spans residues 692 to 712; that stretch reads LVVALALISVLFLLAVILAIA. At 713–930 the chain is on the cytoplasmic side; that stretch reads LRLRRSLSPT…KKKSGKKEKK (218 aa). 2 disordered regions span residues 791-839 and 900-930; these read PHGG…WPNN and ATLTNAAGKRDGKAPAGGNGNKKKSGKKEKK. Residues 800-839 are compositionally biased toward polar residues; the sequence is HPETLTSQAPPNTDWRFSQAQRPGTSGSQNGDDTGTWPNN. Residues 920 to 930 show a composition bias toward basic residues; that stretch reads NKKKSGKKEKK.

It localises to the cell membrane. In terms of biological role, potential calcium-dependent cell-adhesion protein. May be involved in the establishment and maintenance of specific neuronal connections in the brain. This chain is Protocadherin gamma-B6 (PCDHGB6), found in Pan troglodytes (Chimpanzee).